Reading from the N-terminus, the 341-residue chain is tRNA N6-adenosine threonylcarbamoyltransferase (341 aa).

Residues H115 and H119 each coordinate Fe cation. Residues 137 to 141, D170, G183, D187, and N276 each bind substrate; that span reads IVSGG. D304 contributes to the Fe cation binding site.

Belongs to the KAE1 / TsaD family. Requires Fe(2+) as cofactor.

The protein resides in the cytoplasm. The enzyme catalyses L-threonylcarbamoyladenylate + adenosine(37) in tRNA = N(6)-L-threonylcarbamoyladenosine(37) in tRNA + AMP + H(+). Functionally, required for the formation of a threonylcarbamoyl group on adenosine at position 37 (t(6)A37) in tRNAs that read codons beginning with adenine. Is involved in the transfer of the threonylcarbamoyl moiety of threonylcarbamoyl-AMP (TC-AMP) to the N6 group of A37, together with TsaE and TsaB. TsaD likely plays a direct catalytic role in this reaction. This chain is tRNA N6-adenosine threonylcarbamoyltransferase, found in Staphylococcus aureus (strain MSSA476).